Consider the following 84-residue polypeptide: MSKNTINLQDNVLNQVRKNKITVTIFLVNGYKIRGLIKSFDNFTLLMEVNGEQQMIYKHAVSTIIPGKTLNLFSDQSDKNDQEQ.

Residues 10-70 (DNVLNQVRKN…VSTIIPGKTL (61 aa)) form the Sm domain.

The protein belongs to the Hfq family. In terms of assembly, homohexamer.

Its function is as follows. RNA chaperone that binds small regulatory RNA (sRNAs) and mRNAs to facilitate mRNA translational regulation in response to envelope stress, environmental stress and changes in metabolite concentrations. Also binds with high specificity to tRNAs. This Natranaerobius thermophilus (strain ATCC BAA-1301 / DSM 18059 / JW/NM-WN-LF) protein is RNA-binding protein Hfq.